The primary structure comprises 108 residues: Small ribosomal subunit protein uS17 (108 aa).

Residues 1-26 (MREKMAEATETQASETSTRGRPKTRV) form a disordered region. Positions 8-17 (ATETQASETS) are enriched in low complexity.

It belongs to the universal ribosomal protein uS17 family. Part of the 30S ribosomal subunit.

Functionally, one of the primary rRNA binding proteins, it binds specifically to the 5'-end of 16S ribosomal RNA. The sequence is that of Small ribosomal subunit protein uS17 from Myxococcus xanthus (strain DK1622).